We begin with the raw amino-acid sequence, 392 residues long: Phosphoglycerate kinase (392 aa).

Residues 26–28 (DLN), Arg-41, 64–67 (HLGR), Arg-118, and Arg-151 contribute to the substrate site. Residues Lys-202, Glu-319, and 345 to 348 (GGDT) each bind ATP.

Belongs to the phosphoglycerate kinase family. In terms of assembly, monomer.

It is found in the cytoplasm. It catalyses the reaction (2R)-3-phosphoglycerate + ATP = (2R)-3-phospho-glyceroyl phosphate + ADP. It functions in the pathway carbohydrate degradation; glycolysis; pyruvate from D-glyceraldehyde 3-phosphate: step 2/5. The protein is Phosphoglycerate kinase of Photobacterium profundum (strain SS9).